The following is a 176-amino-acid chain: Large ribosomal subunit protein uL6 (176 aa).

It belongs to the universal ribosomal protein uL6 family. In terms of assembly, part of the 50S ribosomal subunit.

Its function is as follows. This protein binds to the 23S rRNA, and is important in its secondary structure. It is located near the subunit interface in the base of the L7/L12 stalk, and near the tRNA binding site of the peptidyltransferase center. This chain is Large ribosomal subunit protein uL6, found in Lactobacillus helveticus (strain DPC 4571).